Here is a 1037-residue protein sequence, read N- to C-terminus: Exportin-T (1037 aa).

This sequence belongs to the exportin family.

The protein localises to the nucleus. Its subcellular location is the cytoplasm. TRNA nucleus export receptor which facilitates tRNA translocation across the nuclear pore complex. Involved in pre-tRNA splicing, probably by affecting the interaction of pre-tRNA with splicing endonuclease. The polypeptide is Exportin-T (los1) (Neosartorya fischeri (strain ATCC 1020 / DSM 3700 / CBS 544.65 / FGSC A1164 / JCM 1740 / NRRL 181 / WB 181) (Aspergillus fischerianus)).